Here is a 359-residue protein sequence, read N- to C-terminus: Phospho-N-acetylmuramoyl-pentapeptide-transferase (359 aa).

At 1 to 25 the chain is on the periplasmic side; that stretch reads MLYQLALLLKDYWFAFNVLKYITFR. Residues 26-48 traverse the membrane as a helical segment; that stretch reads SFTAVLIAFFLTLVLSPSFINRL. Residues 49–74 lie on the Cytoplasmic side of the membrane; that stretch reads RKIQRLFGGYVREYTPESHEVKKYTP. Muraymycin D2 is bound by residues K70 and T75. A helical transmembrane segment spans residues 75–92; that stretch reads TMGGIVILIVVTLSTLLL. Residues 93–98 are Periplasmic-facing; that stretch reads MRWDIK. A helical membrane pass occupies residues 99 to 120; the sequence is YTWVVLLSFLSFGTIGFWDDYV. At 121-130 the chain is on the cytoplasmic side; the sequence is KLKNKKGISI. A helical transmembrane segment spans residues 131–152; it reads KTKFLLQVLSASLISVLIYYWA. The Periplasmic segment spans residues 153-172; the sequence is DIDTILYFPFFKELYVDLGV. A helical membrane pass occupies residues 173–194; the sequence is LYLPFAVFVIVGSANAVNLTDG. Residues N190, D193, and D196 each coordinate muraymycin D2. Residues 195–197 lie on the Cytoplasmic side of the membrane; it reads LDG. A helical transmembrane segment spans residues 198 to 218; the sequence is LAIGPAMTTATALGVVAYAVG. The Periplasmic portion of the chain corresponds to 219–233; sequence HSKIAQYLNIPYVPY. The helical transmembrane segment at 234-255 threads the bilayer; the sequence is AGELTVFCFALVGAGLGFLWFN. Residues 256-264 lie on the Cytoplasmic side of the membrane; the sequence is SFPAQMFMG. G264 and S268 together coordinate muraymycin D2. Residues 265 to 280 form a helical membrane-spanning segment; sequence DVGSLSIGASLATVAL. The Periplasmic segment spans residues 281 to 284; the sequence is LTKS. Residues 285–310 traverse the membrane as a helical segment; it reads EFIFAVAAGVFVFETISVILQIIYFR. Positions 305 and 321 each coordinate muraymycin D2. At 311-332 the chain is on the cytoplasmic side; the sequence is WTGGKRLFKRAPFHHHLELNGL. The helical transmembrane segment at 333–355 threads the bilayer; that stretch reads PEPKIVVRMWIISILLAIIAISM. Residues 356-359 lie on the Periplasmic side of the membrane; that stretch reads LKLR.

It belongs to the glycosyltransferase 4 family. MraY subfamily. As to quaternary structure, homodimer. Mg(2+) is required as a cofactor. Mn(2+) serves as cofactor.

The protein localises to the cell inner membrane. The enzyme catalyses UDP-N-acetyl-alpha-D-muramoyl-L-alanyl-gamma-D-glutamyl-meso-2,6-diaminopimeloyl-D-alanyl-D-alanine + di-trans,octa-cis-undecaprenyl phosphate = di-trans,octa-cis-undecaprenyl diphospho-N-acetyl-alpha-D-muramoyl-L-alanyl-D-glutamyl-meso-2,6-diaminopimeloyl-D-alanyl-D-alanine + UMP. It participates in cell wall biogenesis; peptidoglycan biosynthesis. Its activity is regulated as follows. Inhibited by natural nucleoside antibiotics including tunicamycin, capuramycin and muraymycin. Usually the cofactor magnesium is not required for antibiotic binding. Its function is as follows. Catalyzes the initial step of the lipid cycle reactions in the biosynthesis of the cell wall peptidoglycan: transfers peptidoglycan precursor phospho-MurNAc-pentapeptide from UDP-MurNAc-pentapeptide onto the lipid carrier undecaprenyl phosphate, yielding undecaprenyl-pyrophosphoryl-MurNAc-pentapeptide, known as lipid I. This Aquifex aeolicus (strain VF5) protein is Phospho-N-acetylmuramoyl-pentapeptide-transferase.